A 267-amino-acid chain; its full sequence is UPF0162 protein HI_1558 (267 aa).

Belongs to the UPF0162 family.

The chain is UPF0162 protein HI_1558 from Haemophilus influenzae (strain ATCC 51907 / DSM 11121 / KW20 / Rd).